A 209-amino-acid polypeptide reads, in one-letter code: Imidazole glycerol phosphate synthase subunit HisH (209 aa).

Residues methionine 1–serine 205 form the Glutamine amidotransferase type-1 domain. Cysteine 79 serves as the catalytic Nucleophile. Residues histidine 180 and glutamate 182 contribute to the active site.

In terms of assembly, heterodimer of HisH and HisF.

It localises to the cytoplasm. The enzyme catalyses 5-[(5-phospho-1-deoxy-D-ribulos-1-ylimino)methylamino]-1-(5-phospho-beta-D-ribosyl)imidazole-4-carboxamide + L-glutamine = D-erythro-1-(imidazol-4-yl)glycerol 3-phosphate + 5-amino-1-(5-phospho-beta-D-ribosyl)imidazole-4-carboxamide + L-glutamate + H(+). The catalysed reaction is L-glutamine + H2O = L-glutamate + NH4(+). It functions in the pathway amino-acid biosynthesis; L-histidine biosynthesis; L-histidine from 5-phospho-alpha-D-ribose 1-diphosphate: step 5/9. Functionally, IGPS catalyzes the conversion of PRFAR and glutamine to IGP, AICAR and glutamate. The HisH subunit catalyzes the hydrolysis of glutamine to glutamate and ammonia as part of the synthesis of IGP and AICAR. The resulting ammonia molecule is channeled to the active site of HisF. In Bacillus mycoides (strain KBAB4) (Bacillus weihenstephanensis), this protein is Imidazole glycerol phosphate synthase subunit HisH.